A 204-amino-acid polypeptide reads, in one-letter code: FMN-dependent NADH:quinone oxidoreductase (204 aa).

FMN is bound by residues S10 and 16–18 (SKS).

Belongs to the azoreductase type 1 family. As to quaternary structure, homodimer. Requires FMN as cofactor.

It carries out the reaction 2 a quinone + NADH + H(+) = 2 a 1,4-benzosemiquinone + NAD(+). The enzyme catalyses N,N-dimethyl-1,4-phenylenediamine + anthranilate + 2 NAD(+) = 2-(4-dimethylaminophenyl)diazenylbenzoate + 2 NADH + 2 H(+). Its function is as follows. Quinone reductase that provides resistance to thiol-specific stress caused by electrophilic quinones. Functionally, also exhibits azoreductase activity. Catalyzes the reductive cleavage of the azo bond in aromatic azo compounds to the corresponding amines. In Ruegeria pomeroyi (strain ATCC 700808 / DSM 15171 / DSS-3) (Silicibacter pomeroyi), this protein is FMN-dependent NADH:quinone oxidoreductase.